The primary structure comprises 231 residues: NADH-ubiquinone oxidoreductase chain 4 (231 aa).

The next 6 membrane-spanning stretches (helical) occupy residues 1 to 21 (PIAGSMVLAAILLKLGGYGII), 34 to 54 (LFLPFIVLALWGAILANLTCL), 63 to 85 (IAYSSISHMGLVVAAIIIQTPWG), 89 to 111 (AMALMIAHGFTSSALFCLANTTY), 128 to 148 (ILPMTTTWWLMTNLMNIAIPP), and 156 to 176 (LLIMSALFNWCPATIIMLGLS).

The protein belongs to the complex I subunit 4 family.

It is found in the mitochondrion membrane. It catalyses the reaction a ubiquinone + NADH + 5 H(+)(in) = a ubiquinol + NAD(+) + 4 H(+)(out). Functionally, core subunit of the mitochondrial membrane respiratory chain NADH dehydrogenase (Complex I) that is believed to belong to the minimal assembly required for catalysis. Complex I functions in the transfer of electrons from NADH to the respiratory chain. The immediate electron acceptor for the enzyme is believed to be ubiquinone. The polypeptide is NADH-ubiquinone oxidoreductase chain 4 (MT-ND4) (Crotalus concolor (Midget faded rattlesnake)).